Here is a 160-residue protein sequence, read N- to C-terminus: Cytochrome b6-f complex subunit 4 (160 aa).

Transmembrane regions (helical) follow at residues 36–56 (LLYI…GLAV), 95–115 (LLGV…PFLE), and 131–151 (TVFL…ALPI).

Belongs to the cytochrome b family. PetD subfamily. The 4 large subunits of the cytochrome b6-f complex are cytochrome b6, subunit IV (17 kDa polypeptide, petD), cytochrome f and the Rieske protein, while the 4 small subunits are petG, petL, petM and petN. The complex functions as a dimer.

Its subcellular location is the plastid. It localises to the chloroplast thylakoid membrane. Functionally, component of the cytochrome b6-f complex, which mediates electron transfer between photosystem II (PSII) and photosystem I (PSI), cyclic electron flow around PSI, and state transitions. In Chara vulgaris (Common stonewort), this protein is Cytochrome b6-f complex subunit 4.